A 377-amino-acid chain; its full sequence is Beta sliding clamp (377 aa).

The protein belongs to the beta sliding clamp family. In terms of assembly, forms a ring-shaped head-to-tail homodimer around DNA which binds and tethers DNA polymerases and other proteins to the DNA. The DNA replisome complex has a single clamp-loading complex (3 tau and 1 each of delta, delta', psi and chi subunits) which binds 3 Pol III cores (1 core on the leading strand and 2 on the lagging strand) each with a beta sliding clamp dimer. Additional proteins in the replisome are other copies of gamma, psi and chi, Ssb, DNA helicase and RNA primase.

The protein localises to the cytoplasm. Confers DNA tethering and processivity to DNA polymerases and other proteins. Acts as a clamp, forming a ring around DNA (a reaction catalyzed by the clamp-loading complex) which diffuses in an ATP-independent manner freely and bidirectionally along dsDNA. Initially characterized for its ability to contact the catalytic subunit of DNA polymerase III (Pol III), a complex, multichain enzyme responsible for most of the replicative synthesis in bacteria; Pol III exhibits 3'-5' exonuclease proofreading activity. The beta chain is required for initiation of replication as well as for processivity of DNA replication. This is Beta sliding clamp (dnaN) from Staphylococcus aureus (strain COL).